Reading from the N-terminus, the 409-residue chain is Indian hedgehog protein (409 aa).

The first 23 residues, 1–23 (MQLPKVVLLLCAAALLLSGAVRG), serve as a signal peptide directing secretion. A lipid anchor (N-palmitoyl cysteine) is attached at Cys24. Residues Glu89, Glu90, Asp95, Thr125, Glu126, Asp129, and Asp131 each contribute to the Ca(2+) site. Residues His140, Asp147, and His182 each coordinate Zn(2+). Gly197 carries Cholesterol glycine ester lipidation.

It belongs to the hedgehog family. As to quaternary structure, multimer. Interacts with BOC and CDON. Interacts with PTCH1. Interacts with glypican GPC3. In terms of processing, cholesterylation is required for N-product targeting to lipid rafts and multimerization. The C-terminal domain displays an autoproteolysis activity and a cholesterol transferase activity. Both activities result in the cleavage of the full-length protein and covalent attachment of a cholesterol moiety to the C-terminal of the newly generated N-product. The N-product is the active species in both local and long-range signaling, whereas the C-product is degraded in the endoplasmic reticulum. Post-translationally, N-palmitoylation by HHAT of N-product is required for indian hedgehog protein N-product multimerization and full activity. Expressed in the marginal zone at early gastrulation. At stage 14, expression begins in the neural plate with expression becoming more prominent in the anterodorsal area at neural tube closure. At this stage, also expressed diffusely in the somitic and pre-somitic mesoderm. By the early tadpole (stages 28-30), expression is widespread throughout anterior structures with highest levels in the otic vesicle, the eye, and the branchial arches.

Its subcellular location is the cell membrane. The protein localises to the endoplasmic reticulum membrane. The protein resides in the golgi apparatus membrane. It localises to the secreted. It carries out the reaction glycyl-L-cysteinyl-[protein] + cholesterol + H(+) = [protein]-C-terminal glycyl cholesterol ester + N-terminal L-cysteinyl-[protein]. Signal involved in the early induction and patterning of anterodorsal ectoderm, nervous system and somites. Induces ectopic cement gland formation in embryos. It is involved in the regulation of endochondral skeleton formation, and the development of retinal pigment epithelium (RPE), photoreceptors and periocular tissues. In terms of biological role, the C-terminal part of the indian hedgehog protein precursor displays an autoproteolysis and a cholesterol transferase activity. Both activities result in the cleavage of the full-length protein into two parts followed by the covalent attachment of a cholesterol moiety to the C-terminal of the newly generated N-product. Both activities occur in the endoplasmic reticulum. Functionally, the dually lipidated indian hedgehog protein N-product is a morphogen which is essential for a variety of patterning events during development. Binds to the patched (PTCH1) receptor, which functions in association with smoothened (SMO), to activate the transcription of target genes. Signal involved in the early induction and patterning of anterodorsal ectoderm, nervous system and somites. Induces ectopic cement gland formation in embryos. This Xenopus laevis (African clawed frog) protein is Indian hedgehog protein.